Reading from the N-terminus, the 247-residue chain is Enolase-phosphatase E1 (247 aa).

The protein belongs to the HAD-like hydrolase superfamily. MasA/MtnC family. In terms of assembly, monomer. Requires Mg(2+) as cofactor.

The catalysed reaction is 5-methylsulfanyl-2,3-dioxopentyl phosphate + H2O = 1,2-dihydroxy-5-(methylsulfanyl)pent-1-en-3-one + phosphate. It participates in amino-acid biosynthesis; L-methionine biosynthesis via salvage pathway; L-methionine from S-methyl-5-thio-alpha-D-ribose 1-phosphate: step 3/6. It functions in the pathway amino-acid biosynthesis; L-methionine biosynthesis via salvage pathway; L-methionine from S-methyl-5-thio-alpha-D-ribose 1-phosphate: step 4/6. In terms of biological role, bifunctional enzyme that catalyzes the enolization of 2,3-diketo-5-methylthiopentyl-1-phosphate (DK-MTP-1-P) into the intermediate 2-hydroxy-3-keto-5-methylthiopentenyl-1-phosphate (HK-MTPenyl-1-P), which is then dephosphorylated to form the acireductone 1,2-dihydroxy-3-keto-5-methylthiopentene (DHK-MTPene). This Leptospira biflexa serovar Patoc (strain Patoc 1 / Ames) protein is Enolase-phosphatase E1.